Reading from the N-terminus, the 696-residue chain is Spindle assembly checkpoint component MAD1 (696 aa).

2 disordered regions span residues 1–22 and 394–415; these read MSTGSSPFVDHKSNNSTISINN and QIHANQQHKQQEQEKEENTENK. Residues 402–413 are compositionally biased toward basic and acidic residues; the sequence is KQQEQEKEENTE.

This sequence belongs to the MAD1 family. Component of the mitotic checkpoint complex (MCC).

Its subcellular location is the nucleus. Central component of the spindle assembly checkpoint which is a feedback control that prevents cells with incompletely assembled spindles from leaving mitosis. This is Spindle assembly checkpoint component MAD1 from Candida albicans (strain SC5314 / ATCC MYA-2876) (Yeast).